Reading from the N-terminus, the 257-residue chain is MSGGGKDRIAVFPSRMAQTLMKTRLKGAQKGHSLLKKKADALNLRFRDILRKIVENKVLMGEVMKEAAFSLAEAKFTAGDFSHTVIQNVSQAQYRVRMKKENVVGVFLPVFDAYQDGPDAYDLTGLGKGGANIARLKKNYNKAIELLVELATLQTCFITLDEAIKVTNRRVNAIEHVIIPRIENTLTYIVTELDEMEREEFFRMKKIQANKKKLKEQEAAQKALEGPGPGEDAAHSENNPPRNLLASEEDNLPVLFN.

The interval 215–257 (KEQEAAQKALEGPGPGEDAAHSENNPPRNLLASEEDNLPVLFN) is disordered.

This sequence belongs to the V-ATPase D subunit family. In terms of assembly, V-ATPase is a heteromultimeric enzyme made up of two complexes: the ATP-hydrolytic V1 complex and the proton translocation V0 complex. The V1 complex consists of three catalytic AB heterodimers that form a heterohexamer, three peripheral stalks each consisting of EG heterodimers, one central rotor including subunits D and F, and the regulatory subunits C and H. The proton translocation complex V0 consists of the proton transport subunit a, a ring of proteolipid subunits c9c'', rotary subunit d, subunits e and f, and the accessory subunits vah-19/Ac45 and vah-20/PRR.

In terms of biological role, subunit of the V1 complex of vacuolar(H+)-ATPase (V-ATPase), a multisubunit enzyme composed of a peripheral complex (V1) that hydrolyzes ATP and a membrane integral complex (V0) that translocates protons. V-ATPase is responsible for acidifying and maintaining the pH of intracellular compartments and in some cell types, is targeted to the plasma membrane, where it is responsible for acidifying the extracellular environment. The sequence is that of V-type proton ATPase subunit D from Caenorhabditis elegans.